The sequence spans 598 residues: Transcription factor dpl-1 (598 aa).

Disordered regions lie at residues 1 to 73, 435 to 457, and 573 to 598; these read MNPT…PTGL, NRPY…VNSG, and TEQP…DYFQ. The span at 13-22 shows a compositional bias: polar residues; the sequence is PAQSRPQVSL. The segment covering 55 to 64 has biased composition (gly residues); it reads GVGGSSGAGG.

The protein belongs to the E2F/DP family. In terms of assembly, component of the DRM complex, at least composed of lin-9, lin-35, lin-37, lin-52, lin-53, lin-54- dpl-1 and efl-1. Interacts (via N-terminus) with efl-1. Interacts (via C-terminus) with lin-35 (via C-terminus).

The protein localises to the nucleus. In terms of biological role, synthetic multivulva class B (synMuvB) protein. SynMuvB proteins are required to repress the induction of vulval development by Ras signaling and probably act by forming the multiprotein DRM complex that represses transcription. May also negatively regulate vulval development in association with other SynMuv class B proteins such as lin-15A. Can stimulate E2F-dependent transcription. Plays a role in negatively regulating the progression through the G1 phase of the cell cycle during postembryonic development, most likely by acting as a transcriptional repressor in association with the cell cycle regulatory factor efl-1 and the transcriptional repressor lin-35, but may also act as a positive regulator of cell cycle entry. Involved in the regulation of intestinal cell division during postembryonic development, most likely in complex with efl-1 and lin-35. Promotes germ cell programmed cell death, probably together with efl-1, by positively regulating the expression of the apoptosis proteins ced-3 and ced-4. In particular, positively regulates the expression of ced-4 in response to starvation. Its role in programmed cell death may be in conjunction with cell cycle regulatory factor efl-1 and the synthetic multivulva class B proteins lin-35, lin-37 and lin-52, and is independent of the ced-1, ced-8 and ced-9 pathways. This is Transcription factor dpl-1 from Caenorhabditis elegans.